The chain runs to 618 residues: uncharacterized protein (618 aa).

A disordered region spans residues 1–45 (MSSKSASKLKREAKKAERLAAKGESVKPSKKNGTKNGKDKEVDGV). 2 stretches are compositionally biased toward basic and acidic residues: residues 14-27 (KKAERLAAKGESVK) and 36-45 (NGKDKEVDGV). Ser-50 and Ser-53 each carry phosphoserine. A Phosphothreonine modification is found at Thr-54. 2 positions are modified to phosphoserine: Ser-55 and Ser-64. 2 ABC transporter domains span residues 76–325 (IKID…LKQQ) and 388–609 (IAFN…QSRD). ATP contacts are provided by residues 108–115 (GDNGSGKS) and 423–430 (GKNGTGKS).

It belongs to the ABC transporter superfamily.

It is found in the cytoplasm. This is an uncharacterized protein from Schizosaccharomyces pombe (strain 972 / ATCC 24843) (Fission yeast).